Consider the following 128-residue polypeptide: Lymphocyte antigen 6 complex locus protein G5c (128 aa).

Residues 1–29 (MGAEYGCLPSTSQALYVILLIVLVRMSLV) form the signal peptide. Residues 37–128 (LRCYRCLLET…NPQNRVFYIP (92 aa)) enclose the UPAR/Ly6 domain. Intrachain disulfides connect Cys-39-Cys-66, Cys-42-Cys-51, Cys-58-Cys-85, Cys-94-Cys-111, and Cys-112-Cys-117. N-linked (GlcNAc...) asparagine glycosylation is present at Asn-73.

Forms oligomers. In terms of processing, N-glycosylated. As to expression, abundantly expressed in the epididymis.

It is found in the secreted. In terms of biological role, may have a role in hematopoietic cell differentiation. The protein is Lymphocyte antigen 6 complex locus protein G5c (LY6G5C) of Canis lupus familiaris (Dog).